Reading from the N-terminus, the 395-residue chain is DDB1- and CUL4-associated factor 4-like protein 2 (395 aa).

WD repeat units lie at residues 268-307 and 312-351; these read SHDSAVTSLQILQDGQFLVSSDMTGTIKLWDLRATKCVTQ and VNNSAYLPVHVNEEEGVVAAVGQDCYTRIWSLRHGHLLTT.

This is DDB1- and CUL4-associated factor 4-like protein 2 (DCAF4L2) from Homo sapiens (Human).